The chain runs to 137 residues: Acetyltransferase Atu2258 (137 aa).

Positions 1–137 (MNFVLSDVAD…QSITWLEKRF (137 aa)) constitute an N-acetyltransferase domain. CoA is bound by residues 66–68 (LFV), Gly-74, and 108–110 (RTY).

Functionally, catalyzes the transfer of an acetyl group from acetyl coenzyme A (AcCoA) to an acceptor substrate and releases both CoA and the acetylated product. It prefers glucosamine 6-phosphate or dopamine. It can also use the thialysine, N(8)-acetylspermidine, chloramphenicol, puromycin, polymyxin B, and 4-aminobutyrate ethyl ester. The protein is Acetyltransferase Atu2258 of Agrobacterium fabrum (strain C58 / ATCC 33970) (Agrobacterium tumefaciens (strain C58)).